We begin with the raw amino-acid sequence, 399 residues long: Carbamoyl phosphate synthase arginine-specific small chain (399 aa).

The Glutamine amidotransferase type-1 domain occupies 187 to 379 (DVALVDCGVK…VERMRCYRKL (193 aa)). Residue Cys-267 is the Nucleophile of the active site. Active-site residues include His-352 and Glu-354.

The protein belongs to the CarA family. Heterodimer composed of 2 chains; the small (or glutamine) chain promotes the hydrolysis of glutamine to ammonia, which is used by the large (or ammonia) chain to synthesize carbamoyl phosphate.

Its subcellular location is the cytoplasm. It catalyses the reaction hydrogencarbonate + L-glutamine + 2 ATP + H2O = carbamoyl phosphate + L-glutamate + 2 ADP + phosphate + 2 H(+). The catalysed reaction is L-glutamine + H2O = L-glutamate + NH4(+). The protein operates within amino-acid biosynthesis; L-arginine biosynthesis; carbamoyl phosphate from bicarbonate: step 1/1. Its function is as follows. Small subunit of the arginine-specific carbamoyl phosphate synthase (CPSase). CPSase catalyzes the formation of carbamoyl phosphate from the ammonia moiety of glutamine, carbonate, and phosphate donated by ATP, constituting the first step of 2 biosynthetic pathways, one leading to arginine and/or urea and the other to pyrimidine nucleotides. The small subunit (glutamine amidotransferase) binds and cleaves glutamine to supply the large subunit with the substrate ammonia. This Eremothecium gossypii (strain ATCC 10895 / CBS 109.51 / FGSC 9923 / NRRL Y-1056) (Yeast) protein is Carbamoyl phosphate synthase arginine-specific small chain (CPA1).